The primary structure comprises 67 residues: Large ribosomal subunit protein bL35 (67 aa).

Over residues 1 to 32 the composition is skewed to basic residues; sequence MPKLKNHSGAKKRFAKTATGKYKRRKAGRKHL. Residues 1-54 form a disordered region; that stretch reads MPKLKNHSGAKKRFAKTATGKYKRRKAGRKHLLTPQSGSRKREMRQTGIIKPES.

Belongs to the bacterial ribosomal protein bL35 family.

This Elusimicrobium minutum (strain Pei191) protein is Large ribosomal subunit protein bL35.